The following is a 285-amino-acid chain: 4-diphosphocytidyl-2-C-methyl-D-erythritol kinase (285 aa).

Lysine 11 is a catalytic residue. Residue 95 to 105 (PVAAGIGGGSA) coordinates ATP. Aspartate 137 is an active-site residue.

It belongs to the GHMP kinase family. IspE subfamily.

The catalysed reaction is 4-CDP-2-C-methyl-D-erythritol + ATP = 4-CDP-2-C-methyl-D-erythritol 2-phosphate + ADP + H(+). It functions in the pathway isoprenoid biosynthesis; isopentenyl diphosphate biosynthesis via DXP pathway; isopentenyl diphosphate from 1-deoxy-D-xylulose 5-phosphate: step 3/6. Its function is as follows. Catalyzes the phosphorylation of the position 2 hydroxy group of 4-diphosphocytidyl-2C-methyl-D-erythritol. This is 4-diphosphocytidyl-2-C-methyl-D-erythritol kinase from Paramagnetospirillum magneticum (strain ATCC 700264 / AMB-1) (Magnetospirillum magneticum).